Consider the following 668-residue polypeptide: SH2 domain-containing protein B (668 aa).

Positions 373–411 are disordered; the sequence is SVSGSEESYQQCNSHPQTSRQFENGNGMRLHEEDNSSID. Residues 374-396 show a composition bias toward polar residues; that stretch reads VSGSEESYQQCNSHPQTSRQFEN. Positions 574 to 642 constitute an SH2 domain; that stretch reads WIEGFITKEE…DNICESSERY (69 aa).

Phosphorylated on tyrosine residues. As to expression, expressed in roots, leaves, stems and flowers.

This is SH2 domain-containing protein B from Arabidopsis thaliana (Mouse-ear cress).